We begin with the raw amino-acid sequence, 515 residues long: MVSIPEYYEGKNILLTGATGFLGKVLLEKLLRSCPKVNSVYVLVRQKAGQTPQERVEEILSGKLFDRLRDENPDFRQKIIAINSELTQPKLALSEEDKEIIIDSTNVIFHCAATVRFNENLRDAVQLNVIATRQLILLAQQMKNLEVFMHVSTAYAYCNRKHIDEVVYPPPVDPKKLIDSLEWMDDGLVNDITPKLIGDRPNTYIYTKALAEYVVQQEGAKLNVAIVRPSIVGASWKEPFPGWIDNFNGPSGLFIAAGKGILRTMRASNNALADLVPVDVVVNTSLAAAWYSGVNRPRNIMVYNCTTGSTNPFHWGEVGDYLNHSFKTNPLNQVFRHPYVKFYSNNLMLHYWKGVKHTVPALLLDLALRLTGQKPWMMKTITRLHKAMVFLEYFTSNSWVWNTDNVNMLMNQLNPEDKKTFNIDVRQLHWAEYIENYCMGTKKYVLNEEMSGLPAARKHLNKLRNIRYGFNTILVILIWRIFIARSQMARNIWYFVVSLCYKFLSYFRASSTMRY.

At 1–465 the chain is on the cytoplasmic side; the sequence is MVSIPEYYEG…ARKHLNKLRN (465 aa). A necessary and sufficient for PEX19-mediated localization into peroxisome membrane region spans residues 451–507; the sequence is SGLPAARKHLNKLRNIRYGFNTILVILIWRIFIARSQMARNIWYFVVSLCYKFLSYF. The helical transmembrane segment at 466–483 threads the bilayer; sequence IRYGFNTILVILIWRIFI. The Peroxisomal portion of the chain corresponds to 484 to 515; sequence ARSQMARNIWYFVVSLCYKFLSYFRASSTMRY.

The protein belongs to the fatty acyl-CoA reductase family. In terms of assembly, interacts with PEX19; PEX19 mediates the targeting of FAR1 to peroxisomes.

The protein resides in the peroxisome membrane. The enzyme catalyses a long-chain fatty acyl-CoA + 2 NADPH + 2 H(+) = a long-chain primary fatty alcohol + 2 NADP(+) + CoA. The catalysed reaction is hexadecanoyl-CoA + 2 NADPH + 2 H(+) = hexadecan-1-ol + 2 NADP(+) + CoA. It catalyses the reaction octadecanoyl-CoA + 2 NADPH + 2 H(+) = octadecan-1-ol + 2 NADP(+) + CoA. It carries out the reaction (9Z)-octadecenoyl-CoA + 2 NADPH + 2 H(+) = (9Z)-octadecen-1-ol + 2 NADP(+) + CoA. The enzyme catalyses (9Z,12Z)-octadecadienoyl-CoA + 2 NADPH + 2 H(+) = (9Z,12Z)-octadecadien-1-ol + 2 NADP(+) + CoA. The catalysed reaction is eicosanoyl-CoA + 2 NADPH + 2 H(+) = eicosan-1-ol + 2 NADP(+) + CoA. It catalyses the reaction 16-methylheptadecanoyl-CoA + 2 NADPH + 2 H(+) = 16-methylheptadecan-1-ol + 2 NADP(+) + CoA. It carries out the reaction 18-methylnonadecanoyl-CoA + 2 NADPH + 2 H(+) = 18-methylnonadecan-1-ol + 2 NADP(+) + CoA. In terms of biological role, catalyzes the reduction of saturated and unsaturated C16 or C18 fatty acyl-CoA to fatty alcohols. It plays an essential role in the production of ether lipids/plasmalogens which synthesis requires fatty alcohols. In parallel, it is also required for wax monoesters production since fatty alcohols also constitute a substrate for their synthesis. Catalyzes the reduction of saturated and unsaturated C16 or C18 fatty acyl-CoA to fatty alcohols. It plays an essential role in the production of ether lipids/plasmalogens which synthesis requires fatty alcohols. In parallel, it is also required for wax monoesters production since fatty alcohols also constitute a substrate for their synthesis. This Rattus norvegicus (Rat) protein is Fatty acyl-CoA reductase 1.